Here is a 174-residue protein sequence, read N- to C-terminus: ATP-dependent protease subunit HslV (174 aa).

The active site involves Thr2. Na(+) contacts are provided by Gly157, Cys160, and Thr163.

Belongs to the peptidase T1B family. HslV subfamily. As to quaternary structure, a double ring-shaped homohexamer of HslV is capped on each side by a ring-shaped HslU homohexamer. The assembly of the HslU/HslV complex is dependent on binding of ATP.

It is found in the cytoplasm. It catalyses the reaction ATP-dependent cleavage of peptide bonds with broad specificity.. Allosterically activated by HslU binding. In terms of biological role, protease subunit of a proteasome-like degradation complex believed to be a general protein degrading machinery. This Shewanella sediminis (strain HAW-EB3) protein is ATP-dependent protease subunit HslV.